An 81-amino-acid polypeptide reads, in one-letter code: U-poneritoxin(01)-Om6a (81 aa).

Residues Met1 to Ala21 form the signal peptide. A propeptide spanning residues Gln22 to Pro43 is cleaved from the precursor. Residue Ala79 is modified to Alanine amide.

Belongs to the formicidae venom precursor-01 superfamily. In terms of processing, truncated sequences of this peptide have also been found in the venom. It is possible they have been cleaved in the venom. As to expression, expressed by the venom gland.

Its subcellular location is the secreted. Cationic amphipathic alpha-helical peptide with antimicrobial activities against E.coli (MIC=3.1), and S.aureus (MIC=3.1 uM). Also shows histamine-releasing activity (33.6% at 10 uM). Does not have activity against S.cerevisiae. Does not show hemolytic activity, even at 50 uM. The polypeptide is U-poneritoxin(01)-Om6a (Odontomachus monticola (Trap-jaw ant)).